The sequence spans 149 residues: Transcriptional repressor NrdR (149 aa).

Residues 3 to 34 (CPFCTAEETKVIDSRLAADGYQIRRRRECIGC) fold into a zinc finger. Residues 49–139 (PYIIKNNGNR…VYLSFDDIEE (91 aa)) form the ATP-cone domain.

This sequence belongs to the NrdR family. Requires Zn(2+) as cofactor.

Functionally, negatively regulates transcription of bacterial ribonucleotide reductase nrd genes and operons by binding to NrdR-boxes. This chain is Transcriptional repressor NrdR, found in Haemophilus ducreyi (strain 35000HP / ATCC 700724).